A 324-amino-acid chain; its full sequence is Phospho-N-acetylmuramoyl-pentapeptide-transferase (324 aa).

10 helical membrane passes run 9–29 (TFAVAFIITVIGVPLFIPFLV), 53–73 (TMGAVIFITAMLISFLIFSFI), 77–97 (VSAATWLLFITLALFGALGFL), 117–137 (FLGQVAISILFYLVYHFSDFA), 149–169 (IDLGWFFIIFILFWLVGFSNA), 176–196 (LDGLVSGLSVIAFSAFGVIAF), 201–221 (MDVAIFCFAIVGGMLGFLLFN), 227–247 (IFMGDTGSLALGGSIAAVSIL), 253–273 (LLLLIGIIFVIETASVILQVF), and 304–324 (VLTFWGIGLIGAIISVCVVIF).

This sequence belongs to the glycosyltransferase 4 family. MraY subfamily. Mg(2+) is required as a cofactor.

It is found in the cell membrane. The catalysed reaction is UDP-N-acetyl-alpha-D-muramoyl-L-alanyl-gamma-D-glutamyl-meso-2,6-diaminopimeloyl-D-alanyl-D-alanine + di-trans,octa-cis-undecaprenyl phosphate = di-trans,octa-cis-undecaprenyl diphospho-N-acetyl-alpha-D-muramoyl-L-alanyl-D-glutamyl-meso-2,6-diaminopimeloyl-D-alanyl-D-alanine + UMP. It participates in cell wall biogenesis; peptidoglycan biosynthesis. Functionally, catalyzes the initial step of the lipid cycle reactions in the biosynthesis of the cell wall peptidoglycan: transfers peptidoglycan precursor phospho-MurNAc-pentapeptide from UDP-MurNAc-pentapeptide onto the lipid carrier undecaprenyl phosphate, yielding undecaprenyl-pyrophosphoryl-MurNAc-pentapeptide, known as lipid I. The sequence is that of Phospho-N-acetylmuramoyl-pentapeptide-transferase from Listeria innocua serovar 6a (strain ATCC BAA-680 / CLIP 11262).